We begin with the raw amino-acid sequence, 345 residues long: Protein-glutamate methylesterase/protein-glutamine glutaminase 2 (345 aa).

The region spanning 7 to 124 (KVLVVDDSPV…TADMLGYRSL (118 aa)) is the Response regulatory domain. 4-aspartylphosphate is present on D58. Residues 154-345 (STSQYQLIAI…LPQFLCDLLS (192 aa)) enclose the CheB-type methylesterase domain. Catalysis depends on residues S166, H192, and D289.

It belongs to the CheB family. Phosphorylated by CheA. Phosphorylation of the N-terminal regulatory domain activates the methylesterase activity.

It is found in the cytoplasm. It carries out the reaction [protein]-L-glutamate 5-O-methyl ester + H2O = L-glutamyl-[protein] + methanol + H(+). The enzyme catalyses L-glutaminyl-[protein] + H2O = L-glutamyl-[protein] + NH4(+). Its function is as follows. Involved in chemotaxis. Part of a chemotaxis signal transduction system that modulates chemotaxis in response to various stimuli. Catalyzes the demethylation of specific methylglutamate residues introduced into the chemoreceptors (methyl-accepting chemotaxis proteins or MCP) by CheR. Also mediates the irreversible deamidation of specific glutamine residues to glutamic acid. In Vibrio vulnificus (strain YJ016), this protein is Protein-glutamate methylesterase/protein-glutamine glutaminase 2.